We begin with the raw amino-acid sequence, 137 residues long: MQATDQSNAVAYRGTGRRKSSIVRVRLVPGSGVMTINGKPGDLYLQFNPSYIANAKAPLESLGLENDYDVLVNARGGGLTGQADAIKLGVARALCELDPENRKPLKLEGYLTRDPRAKERKKYGLRKARKAPQYSKR.

The disordered stretch occupies residues 118-137; that stretch reads KERKKYGLRKARKAPQYSKR.

The protein belongs to the universal ribosomal protein uS9 family.

In Acaryochloris marina (strain MBIC 11017), this protein is Small ribosomal subunit protein uS9.